The chain runs to 277 residues: Collectin-10 (277 aa).

A signal peptide spans 1–27; that stretch reads MSRKKEQQLRKYGTLVVLFIFQVQIFG. Positions 41 to 82 are disordered; sequence THTILPGPKGDDGEKGDRGEVGKQGKVGPKGPKGNKGTVGDV. Basic and acidic residues predominate over residues 49–63; the sequence is KGDDGEKGDRGEVGK. Residues 56 to 115 form the Collagen-like domain; sequence GDRGEVGKQGKVGPKGPKGNKGTVGDVGDQGMLGKIGPIGGKGDKGAKGISGVSGKKGKA. Residues 64–79 are compositionally biased toward low complexity; the sequence is QGKVGPKGPKGNKGTV. The C-type lectin domain occupies 155–271; it reads TDEKFYYIVK…CQVTIYFICE (117 aa). Disulfide bonds link Cys-176–Cys-270 and Cys-248–Cys-262. Asn-258 carries an N-linked (GlcNAc...) asparagine glycan.

It belongs to the COLEC10/COLEC11 family. Widely expressed. Highly expressed in lung. Weakly expressed in larynx, syrinx and cranial air sac. Expressed throughout the lower gastrointestinal tract in increasing levels starting from a faint signal in duodenum and ending with relatively high signals in proctodeum, coprodeum and urodeum. In the upper part of the gastrointestinal tract, expressed in tongue, crop, and mucosa of the crop.

It localises to the secreted. Its subcellular location is the golgi apparatus. It is found in the cytoplasm. In terms of biological role, lectin that binds to various sugars: galactose &gt; mannose = fucose &gt; N-acetylglucosamine &gt; N-acetylgalactosamine. Acts as a chemoattractant, probably involved in the regulation of cell migration. In Gallus gallus (Chicken), this protein is Collectin-10 (COLEC10).